The chain runs to 164 residues: UPF0304 protein YPDSF_1971 (164 aa).

It belongs to the UPF0304 family.

In Yersinia pestis (strain Pestoides F), this protein is UPF0304 protein YPDSF_1971.